A 36-amino-acid polypeptide reads, in one-letter code: Mu/kappa-theraphotoxin-Ap1a (36 aa).

3 cysteine pairs are disulfide-bonded: cysteine 3/cysteine 18, cysteine 10/cysteine 23, and cysteine 17/cysteine 30. At phenylalanine 36 the chain carries Phenylalanine amide.

This sequence belongs to the neurotoxin 10 (Hwtx-1) family. As to expression, expressed by the venom gland.

Its subcellular location is the secreted. Inhibitor of voltage-gated potassium and sodium channels. Among other potassium channels, it selectively inhibits Kv10.1/KCNH1/EAG1 (IC(50)=236 nM) by shifting the voltage dependence of channel activation in a depolarising direction, it shows a maximum inhibition of 80% at saturating concentrations, it shows fast on-rates, and is poorly reversible. It also slightly affects channel inactivation, when the membrane is highly depolarised (&gt;+80 mV). It shows similar potency on Nav1.7/SCN9A (IC(50)=222 nM) and lower potency on Nav1.2/SCN2A (IC(50)=519 nM). This chain is Mu/kappa-theraphotoxin-Ap1a, found in Avicularia purpurea (Ecuadorian purple pinktoe tarantula).